The primary structure comprises 298 residues: Aquaporin NIP2-1 (298 aa).

Asn-4, Asn-13, and Asn-26 each carry an N-linked (GlcNAc...) asparagine glycan. 2 helical membrane-spanning segments follow: residues 51 to 71 (VVSE…AAGI) and 85 to 105 (SIAG…ISGA). Positions 108–110 (NPA) match the NPA 1 motif. A run of 3 helical transmembrane segments spans residues 124 to 144 (IQVP…SFVL), 166 to 186 (SLVV…AVAT), and 194 to 214 (LAGL…GAIS). Positions 219-221 (NPA) match the NPA 2 motif. The helical transmembrane segment at 237–257 (WIYFLGPVMGTLSGAWTYTFI) threads the bilayer.

Belongs to the MIP/aquaporin (TC 1.A.8) family. NIP (TC 1.A.8.12) subfamily. Mainly expressed in the roots. In roots, it localizes in the main and lateral roots, but not in root hairs. Within a root, it localizes on the plasma membrane of the distal side of both exodermis and endodermis, where casparian strips exist (at protein level). Expressed low levels in leaves and anthers.

Its subcellular location is the cell membrane. In terms of biological role, silicon influx transporter responsible for silicon transport from the external solution to the root cells. Is coupled with the silicon efflux transporter LSI2 in both exodermal and endodermal root cells for an efficient silicon transport across the cells into the stele. Silicon is beneficial to plant growth and helps plants to overcome abiotic and biotic stresses by preventing lodging (falling over) and increasing resistance to pests and diseases, as well as other stresses. Is coupled with LSI2 transporter in roots for efficient uptake of arsenite, which is further dispatched in shoots and grains. Mediates uptake of methylated arsenic species in roots. The chain is Aquaporin NIP2-1 from Oryza sativa subsp. japonica (Rice).